The primary structure comprises 845 residues: Protein arginine N-methyltransferase 9 (845 aa).

3 TPR repeats span residues 25–58, 67–100, and 101–134; these read VSRS…APEL, QYTL…FPDD, and EVIC…NPDF. SAM-dependent MTase PRMT-type domains lie at 137-466 and 530-845; these read AKEN…YLRI and NIPY…TVKQ.

It belongs to the class I-like SAM-binding methyltransferase superfamily. Protein arginine N-methyltransferase family. As to quaternary structure, found in a complex with PRMT9, SF3B2 and SF3B4. Interacts with SF3B2.

Its subcellular location is the cytoplasm. It catalyses the reaction L-arginyl-[protein] + 2 S-adenosyl-L-methionine = N(omega),N(omega)'-dimethyl-L-arginyl-[protein] + 2 S-adenosyl-L-homocysteine + 2 H(+). In terms of biological role, arginine methyltransferase that can both catalyze the formation of omega-N monomethylarginine (MMA) and symmetrical dimethylarginine (sDMA). Specifically mediates the symmetrical dimethylation of SF3B2. Involved in the regulation of alternative splicing of pre-mRNA. This is Protein arginine N-methyltransferase 9 from Homo sapiens (Human).